The sequence spans 681 residues: Peroxisomal acyl-coenzyme A oxidase 2 (681 aa).

At Ser9 the chain carries Phosphoserine. Lys66, Lys137, Lys453, Lys561, and Lys667 each carry N6-succinyllysine. A Microbody targeting signal motif is present at residues 679–681 (SNL).

It belongs to the acyl-CoA oxidase family. As to quaternary structure, homodimer. The cofactor is FAD. As to expression, liver and kidney.

It is found in the peroxisome. It carries out the reaction (25R)-3alpha,7alpha,12alpha-trihydroxy-5beta-cholestan-26-oyl-CoA + A + H2O = (24R,25R)-3alpha,7alpha,12alpha,24-tetrahydroxy-5beta-cholestan-26-oyl-CoA + AH2. The enzyme catalyses (25S)-3alpha,7alpha,12alpha-trihydroxy-5beta-cholestan-26-oyl-CoA + O2 = (24E)-3alpha,7alpha,12alpha-trihydroxy-5beta-cholest-24-en-26-oyl-CoA + H2O2. In terms of biological role, oxidizes the CoA esters of the bile acid intermediates di- and tri-hydroxycholestanoic acids. Capable of oxidizing short as well as long chain 2-methyl branched fatty acids. The chain is Peroxisomal acyl-coenzyme A oxidase 2 from Oryctolagus cuniculus (Rabbit).